The primary structure comprises 774 residues: Beta-xylosidase/alpha-L-arabinofuranosidase 2 (774 aa).

Residues 1-33 (MASVENRTPNVSVFLCFFVLFATLLLSGGRVSS) form the signal peptide. N-linked (GlcNAc...) asparagine glycosylation occurs at Asn136. Asp303 is a catalytic residue. N-linked (GlcNAc...) asparagine glycosylation occurs at Asn437.

The protein belongs to the glycoside hydrolase 3 family.

Its subcellular location is the secreted. It localises to the extracellular space. The protein resides in the extracellular matrix. The catalysed reaction is Hydrolysis of (1-&gt;4)-beta-D-xylans, to remove successive D-xylose residues from the non-reducing termini.. The enzyme catalyses Hydrolysis of terminal non-reducing alpha-L-arabinofuranoside residues in alpha-L-arabinosides.. Functionally, a bifunctional beta-xylosidase/alpha-L-arabinosidase, exo-enzyme that acts synergistically with endohydrolases. Releases xylose and arabinose from cell walls. The protein is Beta-xylosidase/alpha-L-arabinofuranosidase 2 of Medicago sativa subsp. varia (Alfalfa).